The chain runs to 95 residues: Small ubiquitin-related modifier 2-A (95 aa).

Residue K11 forms a Glycyl lysine isopeptide (Lys-Gly) (interchain with G-Cter in SUMO) linkage. The Ubiquitin-like domain occupies D16–F95. G93 participates in a covalent cross-link: Glycyl lysine isopeptide (Gly-Lys) (interchain with K-? in acceptor proteins). A propeptide spanning residues S94–F95 is cleaved from the precursor.

This sequence belongs to the ubiquitin family. SUMO subfamily. Interacts with sae2 and ube2i. Covalently attached to a number of proteins, including top2. Polymeric chains can be formed through Lys-11 cross-linking. Post-translationally, cleavage of precursor form by a sentrin-specific protease is necessary for function.

The protein localises to the nucleus. Functionally, ubiquitin-like protein that can be covalently attached to proteins as a monomer or as a lysine-linked polymer. Covalent attachment via an isopeptide bond to its substrates requires prior activation by the E1 complex sae1-sae2 and linkage to the E2 enzyme ube2i, and can be promoted by an E3 ligase such as pias1-4. This post-translational modification on lysine residues of proteins plays a crucial role in a number of cellular processes such as nuclear transport, DNA replication and repair, mitosis and signal transduction. Polymeric sumo2 chains are also susceptible to polyubiquitination which functions as a signal for proteasomal degradation of modified proteins. The chain is Small ubiquitin-related modifier 2-A (sumo2-a) from Xenopus laevis (African clawed frog).